The following is a 264-amino-acid chain: Thymidylate synthase (264 aa).

Residues Arg-21 and Arg-126–Arg-127 contribute to the dUMP site. The Nucleophile role is filled by Cys-146. Residues Arg-166 to Asp-169, Asn-177, and His-207 to Tyr-209 contribute to the dUMP site. Asp-169 contacts (6R)-5,10-methylene-5,6,7,8-tetrahydrofolate. Ala-263 lines the (6R)-5,10-methylene-5,6,7,8-tetrahydrofolate pocket.

The protein belongs to the thymidylate synthase family. Bacterial-type ThyA subfamily. In terms of assembly, homodimer.

It localises to the cytoplasm. The catalysed reaction is dUMP + (6R)-5,10-methylene-5,6,7,8-tetrahydrofolate = 7,8-dihydrofolate + dTMP. It participates in pyrimidine metabolism; dTTP biosynthesis. Its function is as follows. Catalyzes the reductive methylation of 2'-deoxyuridine-5'-monophosphate (dUMP) to 2'-deoxythymidine-5'-monophosphate (dTMP) while utilizing 5,10-methylenetetrahydrofolate (mTHF) as the methyl donor and reductant in the reaction, yielding dihydrofolate (DHF) as a by-product. This enzymatic reaction provides an intracellular de novo source of dTMP, an essential precursor for DNA biosynthesis. The sequence is that of Thymidylate synthase from Bradyrhizobium sp. (strain BTAi1 / ATCC BAA-1182).